The primary structure comprises 363 residues: DNA replication and repair protein RecF (363 aa).

ATP is bound at residue 30-37; it reads GSNGSGKT.

The protein belongs to the RecF family.

The protein resides in the cytoplasm. Its function is as follows. The RecF protein is involved in DNA metabolism; it is required for DNA replication and normal SOS inducibility. RecF binds preferentially to single-stranded, linear DNA. It also seems to bind ATP. This Photorhabdus laumondii subsp. laumondii (strain DSM 15139 / CIP 105565 / TT01) (Photorhabdus luminescens subsp. laumondii) protein is DNA replication and repair protein RecF.